Reading from the N-terminus, the 320-residue chain is tRNA U34 carboxymethyltransferase (320 aa).

Residues K89, W103, K108, G128, 150–152 (DPT), 179–180 (IE), M194, Y198, and R313 contribute to the carboxy-S-adenosyl-L-methionine site.

This sequence belongs to the class I-like SAM-binding methyltransferase superfamily. CmoB family. In terms of assembly, homotetramer.

The catalysed reaction is carboxy-S-adenosyl-L-methionine + 5-hydroxyuridine(34) in tRNA = 5-carboxymethoxyuridine(34) in tRNA + S-adenosyl-L-homocysteine + H(+). Functionally, catalyzes carboxymethyl transfer from carboxy-S-adenosyl-L-methionine (Cx-SAM) to 5-hydroxyuridine (ho5U) to form 5-carboxymethoxyuridine (cmo5U) at position 34 in tRNAs. This chain is tRNA U34 carboxymethyltransferase, found in Actinobacillus pleuropneumoniae serotype 3 (strain JL03).